We begin with the raw amino-acid sequence, 1587 residues long: Pentafunctional AROM polypeptide (1587 aa).

Residues M1–N384 form a 3-dehydroquinate synthase region. NAD(+) contacts are provided by residues D44–N46, E81–K84, G114–V116, and D119. Position 130 (R130) interacts with 7-phospho-2-dehydro-3-deoxy-D-arabino-heptonate. Position 139-140 (T139–T140) interacts with NAD(+). Residues D146 and K152 each coordinate 7-phospho-2-dehydro-3-deoxy-D-arabino-heptonate. Position 161 (K161) interacts with NAD(+). Residue N162 coordinates 7-phospho-2-dehydro-3-deoxy-D-arabino-heptonate. NAD(+) contacts are provided by residues F179–T182 and N190. Zn(2+) is bound at residue E194. Residues E194–K197 and K250 contribute to the 7-phospho-2-dehydro-3-deoxy-D-arabino-heptonate site. Catalysis depends on E260, which acts as the Proton acceptor; for 3-dehydroquinate synthase activity. Residues R264–N268 and H271 each bind 7-phospho-2-dehydro-3-deoxy-D-arabino-heptonate. Residue H271 coordinates Zn(2+). H275 serves as the catalytic Proton acceptor; for 3-dehydroquinate synthase activity. H287 and K356 together coordinate 7-phospho-2-dehydro-3-deoxy-D-arabino-heptonate. Zn(2+) is bound at residue H287. The tract at residues V397–V842 is EPSP synthase. C824 functions as the For EPSP synthase activity in the catalytic mechanism. Residues S864–S1055 are shikimate kinase. G871–T878 contributes to the ATP binding site. The 3-dehydroquinase stretch occupies residues L1056–E1276. The Proton acceptor; for 3-dehydroquinate dehydratase activity role is filled by H1179. The active-site Schiff-base intermediate with substrate; for 3-dehydroquinate dehydratase activity is K1207. Residues K1289–D1587 form a shikimate dehydrogenase region.

In the N-terminal section; belongs to the sugar phosphate cyclases superfamily. Dehydroquinate synthase family. It in the 2nd section; belongs to the EPSP synthase family. This sequence in the 3rd section; belongs to the shikimate kinase family. The protein in the 4th section; belongs to the type-I 3-dehydroquinase family. In the C-terminal section; belongs to the shikimate dehydrogenase family. In terms of assembly, homodimer. Zn(2+) is required as a cofactor.

It localises to the cytoplasm. The enzyme catalyses 7-phospho-2-dehydro-3-deoxy-D-arabino-heptonate = 3-dehydroquinate + phosphate. It catalyses the reaction 3-dehydroquinate = 3-dehydroshikimate + H2O. The catalysed reaction is shikimate + NADP(+) = 3-dehydroshikimate + NADPH + H(+). It carries out the reaction shikimate + ATP = 3-phosphoshikimate + ADP + H(+). The enzyme catalyses 3-phosphoshikimate + phosphoenolpyruvate = 5-O-(1-carboxyvinyl)-3-phosphoshikimate + phosphate. The protein operates within metabolic intermediate biosynthesis; chorismate biosynthesis; chorismate from D-erythrose 4-phosphate and phosphoenolpyruvate: step 2/7. Its pathway is metabolic intermediate biosynthesis; chorismate biosynthesis; chorismate from D-erythrose 4-phosphate and phosphoenolpyruvate: step 3/7. It functions in the pathway metabolic intermediate biosynthesis; chorismate biosynthesis; chorismate from D-erythrose 4-phosphate and phosphoenolpyruvate: step 4/7. It participates in metabolic intermediate biosynthesis; chorismate biosynthesis; chorismate from D-erythrose 4-phosphate and phosphoenolpyruvate: step 5/7. The protein operates within metabolic intermediate biosynthesis; chorismate biosynthesis; chorismate from D-erythrose 4-phosphate and phosphoenolpyruvate: step 6/7. The AROM polypeptide catalyzes 5 consecutive enzymatic reactions in prechorismate polyaromatic amino acid biosynthesis. In Aspergillus clavatus (strain ATCC 1007 / CBS 513.65 / DSM 816 / NCTC 3887 / NRRL 1 / QM 1276 / 107), this protein is Pentafunctional AROM polypeptide.